Here is an 84-residue protein sequence, read N- to C-terminus: Small ribosomal subunit protein bS16 (84 aa).

The protein belongs to the bacterial ribosomal protein bS16 family.

This chain is Small ribosomal subunit protein bS16, found in Burkholderia ambifaria (strain MC40-6).